The primary structure comprises 365 residues: Glucose 1-dehydrogenase 1 (365 aa).

Residue aspartate 38 coordinates Zn(2+). Residue threonine 40 participates in substrate binding. Residues histidine 63 and glutamate 64 each contribute to the Zn(2+) site. Substrate is bound by residues glutamate 115 and glutamate 151. Glutamate 151 lines the Zn(2+) pocket. NADP(+)-binding positions include asparagine 182–leucine 185, arginine 207–arginine 208, leucine 272–valine 274, and serine 301–asparagine 303. Asparagine 303 is a binding site for substrate.

The protein belongs to the zinc-containing alcohol dehydrogenase family. Glucose 1-dehydrogenase subfamily. Requires Zn(2+) as cofactor.

The catalysed reaction is D-glucose + NAD(+) = D-glucono-1,5-lactone + NADH + H(+). It carries out the reaction D-glucose + NADP(+) = D-glucono-1,5-lactone + NADPH + H(+). Its function is as follows. Catalyzes the NAD(P)(+)-dependent oxidation of D-glucose to D-gluconate via gluconolactone. Can utilize both NAD(+) and NADP(+) as electron acceptor. Is involved in the degradation of glucose through a modified Entner-Doudoroff pathway. The protein is Glucose 1-dehydrogenase 1 of Haloterrigena turkmenica (strain ATCC 51198 / DSM 5511 / JCM 9101 / NCIMB 13204 / VKM B-1734 / 4k) (Halococcus turkmenicus).